The chain runs to 550 residues: Membrane protein insertase YidC (550 aa).

The chain crosses the membrane as a helical span at residues 6–26 (LIVFIVLSFGLLFVWQEYFAP). The interval 30 to 59 (PKPVAAAVQPDGTPAPATARPADSPATGKL) is disordered. Helical transmembrane passes span 360–380 (WGWAIVLLTVLVKAAFYPLSA), 430–450 (LPIVVQIPVFIGLYWALLASV), 472–492 (ILPALMAATMYLQTFLNPPPA), and 504–524 (PLAFSVMFFFFPAGLVLYWLV).

This sequence belongs to the OXA1/ALB3/YidC family. Type 1 subfamily. Interacts with the Sec translocase complex via SecD. Specifically interacts with transmembrane segments of nascent integral membrane proteins during membrane integration.

The protein resides in the cell inner membrane. Its function is as follows. Required for the insertion and/or proper folding and/or complex formation of integral membrane proteins into the membrane. Involved in integration of membrane proteins that insert both dependently and independently of the Sec translocase complex, as well as at least some lipoproteins. Aids folding of multispanning membrane proteins. The chain is Membrane protein insertase YidC from Laribacter hongkongensis (strain HLHK9).